The primary structure comprises 227 residues: Phosphoribosylformylglycinamidine synthase subunit PurQ (227 aa).

One can recognise a Glutamine amidotransferase type-1 domain in the interval 3 to 225 (FAVIVFPGSN…LKQWRETYVV (223 aa)). The active-site Nucleophile is the C86. Active-site residues include H194 and E196.

Part of the FGAM synthase complex composed of 1 PurL, 1 PurQ and 2 PurS subunits.

It localises to the cytoplasm. It carries out the reaction N(2)-formyl-N(1)-(5-phospho-beta-D-ribosyl)glycinamide + L-glutamine + ATP + H2O = 2-formamido-N(1)-(5-O-phospho-beta-D-ribosyl)acetamidine + L-glutamate + ADP + phosphate + H(+). The enzyme catalyses L-glutamine + H2O = L-glutamate + NH4(+). It functions in the pathway purine metabolism; IMP biosynthesis via de novo pathway; 5-amino-1-(5-phospho-D-ribosyl)imidazole from N(2)-formyl-N(1)-(5-phospho-D-ribosyl)glycinamide: step 1/2. Its function is as follows. Part of the phosphoribosylformylglycinamidine synthase complex involved in the purines biosynthetic pathway. Catalyzes the ATP-dependent conversion of formylglycinamide ribonucleotide (FGAR) and glutamine to yield formylglycinamidine ribonucleotide (FGAM) and glutamate. The FGAM synthase complex is composed of three subunits. PurQ produces an ammonia molecule by converting glutamine to glutamate. PurL transfers the ammonia molecule to FGAR to form FGAM in an ATP-dependent manner. PurS interacts with PurQ and PurL and is thought to assist in the transfer of the ammonia molecule from PurQ to PurL. This Bacillus mycoides (strain KBAB4) (Bacillus weihenstephanensis) protein is Phosphoribosylformylglycinamidine synthase subunit PurQ.